The primary structure comprises 482 residues: Nicotine dehydrogenase (482 aa).

The tat-type signal signal peptide spans 1-38 (MSDKTKTNEGFSRRSFIGSAAVVTAGVAGLGAIDAASA). FAD-binding residues include Ala-64, Glu-83, Ala-84, Arg-85, Arg-91, Trp-108, and Val-279. Thr-381 lines the (S)-nicotine pocket. FAD is bound by residues Ala-453, Asn-462, and Ile-463.

This sequence belongs to the flavin monoamine oxidase family. In terms of assembly, monomer in solution. Homodimer in solution. Forms homodimers in the crystal. Requires FAD as cofactor. Predicted to be exported by the Tat system. The position of the signal peptide cleavage has not been experimentally proven.

The protein localises to the periplasm. The catalysed reaction is (S)-nicotine + 2 Fe(III)-[cytochrome c] = N-methylmyosmine + 2 Fe(II)-[cytochrome c] + 2 H(+). It participates in alkaloid degradation; nicotine degradation. With respect to regulation, the catalytic rate is not significantly affected by pH. Its function is as follows. Involved in nicotine degradation. Catalyzes the conversion of nicotine to N-methylmyosmine. N-methylmyosmine undergoes spontaneous hydrolysis to form pseudooxynicotine (PN). S-nicotine is the optimal substrate. Has lower activity with some nicotine analogs, but shows no activity towards neurotransmitters, including serotonin, dopamine, and norepinephrine, nicotine metabolites and common neuroactive drugs. The enzyme is stereospecific with poor activity with (R)-nicotine as the substrate. The c-type cytochrome protein CycN is the physiological electron acceptor. O(2) is a poor electron acceptor. The polypeptide is Nicotine dehydrogenase (Pseudomonas putida (strain DSM 28022 / S16)).